A 160-amino-acid polypeptide reads, in one-letter code: Gene 34 protein (160 aa).

A compositionally biased stretch (polar residues) spans 1 to 11 (MDSPRGISTAT). A disordered region spans residues 1-26 (MDSPRGISTATGDAHAEAAVSPAAEI).

The sequence is that of Gene 34 protein from Equus caballus (Horse).